The chain runs to 199 residues: Chaperone protein TorD (199 aa).

Belongs to the TorD/DmsD family. TorD subfamily.

It localises to the cytoplasm. Involved in the biogenesis of TorA. Acts on TorA before the insertion of the molybdenum cofactor and, as a result, probably favors a conformation of the apoenzyme that is competent for acquiring the cofactor. The protein is Chaperone protein TorD of Escherichia coli (strain ATCC 8739 / DSM 1576 / NBRC 3972 / NCIMB 8545 / WDCM 00012 / Crooks).